We begin with the raw amino-acid sequence, 156 residues long: MKKVRLTREGYEKLKQELEELKRKFMYEISERIKEARELGDLSENSEYEAAKNEQGRVGSRIMEIEQILSNAEIIEDSEEGDEVTLGKWVTIRNLDTGEEHKFRIVTPQEADFFAQKLSADSPLGKSLLGRKVGDIVKVKAPGGVQRYQVVEVTNR.

The stretch at 1–32 (MKKVRLTREGYEKLKQELEELKRKFMYEISER) forms a coiled coil.

This sequence belongs to the GreA/GreB family.

In terms of biological role, necessary for efficient RNA polymerase transcription elongation past template-encoded arresting sites. The arresting sites in DNA have the property of trapping a certain fraction of elongating RNA polymerases that pass through, resulting in locked ternary complexes. Cleavage of the nascent transcript by cleavage factors such as GreA or GreB allows the resumption of elongation from the new 3'terminus. GreA releases sequences of 2 to 3 nucleotides. The protein is Transcription elongation factor GreA of Thermotoga neapolitana (strain ATCC 49049 / DSM 4359 / NBRC 107923 / NS-E).